A 143-amino-acid polypeptide reads, in one-letter code: uncharacterized protein (143 aa).

The next 4 membrane-spanning stretches (helical) occupy residues 7–29, 52–74, 87–105, and 120–142; these read LFLFLHVVLATFWVGGMLFLSLV, FSLYGTFLSLFLLFVTGLVNTYL, LGVFFVVVFISLLHDLWAG, and WLGILNLILSLLLVYLGVRIRLG.

The protein localises to the cell membrane. This is an uncharacterized protein from Aquifex aeolicus (strain VF5).